The chain runs to 570 residues: Sulfite reductase [NADPH] hemoprotein beta-component (570 aa).

Cys-434, Cys-440, Cys-479, and Cys-483 together coordinate [4Fe-4S] cluster. Position 483 (Cys-483) interacts with siroheme.

This sequence belongs to the nitrite and sulfite reductase 4Fe-4S domain family. As to quaternary structure, alpha(8)-beta(8). The alpha component is a flavoprotein, the beta component is a hemoprotein. It depends on siroheme as a cofactor. [4Fe-4S] cluster serves as cofactor.

It catalyses the reaction hydrogen sulfide + 3 NADP(+) + 3 H2O = sulfite + 3 NADPH + 4 H(+). The protein operates within sulfur metabolism; hydrogen sulfide biosynthesis; hydrogen sulfide from sulfite (NADPH route): step 1/1. Functionally, component of the sulfite reductase complex that catalyzes the 6-electron reduction of sulfite to sulfide. This is one of several activities required for the biosynthesis of L-cysteine from sulfate. This chain is Sulfite reductase [NADPH] hemoprotein beta-component, found in Enterobacter sp. (strain 638).